A 91-amino-acid polypeptide reads, in one-letter code: Large ribosomal subunit protein bL27 (91 aa).

The disordered stretch occupies residues 1-22 (MAHKKAGGSSRNGRDSAGRRLG).

It belongs to the bacterial ribosomal protein bL27 family.

This Methylocella silvestris (strain DSM 15510 / CIP 108128 / LMG 27833 / NCIMB 13906 / BL2) protein is Large ribosomal subunit protein bL27.